The following is a 119-amino-acid chain: Large ribosomal subunit protein uL14 (119 aa).

It belongs to the universal ribosomal protein uL14 family. As to quaternary structure, part of the 50S ribosomal subunit. Forms a cluster with proteins L3 and L19. In the 70S ribosome, L14 and L19 interact and together make contacts with the 16S rRNA in bridges B5 and B8.

Binds to 23S rRNA. Forms part of two intersubunit bridges in the 70S ribosome. In Ehrlichia ruminantium (strain Gardel), this protein is Large ribosomal subunit protein uL14.